A 116-amino-acid chain; its full sequence is C-C motif chemokine 6 (116 aa).

A signal peptide spans 1 to 21 (MRNSKTAISFFILVAVLGSQA). Intrachain disulfides connect Cys50-Cys73, Cys51-Cys89, and Cys60-Cys100.

Belongs to the intercrine beta (chemokine CC) family. Post-translationally, the N-terminal is proteolytically cleaved by proteases associated with inflammatory responses. The processed forms CL6(22-95) and CCL6(23-95) show increase in CCR1-mediated signaling and chemotaxis assays in vitro. Expressed in myelopoietic bone marrow cultures stimulated by GM-CSF.

The protein resides in the secreted. Chemotactic factor that attracts mostly macrophage, but it can also attract B cells, CD4(+) lymphocytes and eosinophils. The chain is C-C motif chemokine 6 (Ccl6) from Mus musculus (Mouse).